The sequence spans 609 residues: UvrABC system protein C (609 aa).

The GIY-YIG domain maps to 16–94; sequence SSAGVYRMYD…IKQYMPKYNV (79 aa). Positions 203 to 238 constitute a UVR domain; sequence KQVISELVAKMEEAAEQQAYEQAARFRDQIMALRRV.

The protein belongs to the UvrC family. In terms of assembly, interacts with UvrB in an incision complex.

The protein resides in the cytoplasm. Its function is as follows. The UvrABC repair system catalyzes the recognition and processing of DNA lesions. UvrC both incises the 5' and 3' sides of the lesion. The N-terminal half is responsible for the 3' incision and the C-terminal half is responsible for the 5' incision. This chain is UvrABC system protein C, found in Shewanella sp. (strain MR-4).